The primary structure comprises 336 residues: CASP-like protein UU1 (336 aa).

Residues 1–170 (MGKGPGLDPS…PAMESNKDDN (170 aa)) lie on the Cytoplasmic side of the membrane. A helical membrane pass occupies residues 171 to 191 (FFGAIVLSLRAAQIVFTVVGL). Over 192-222 (GVMGSLKHTSHGDYYYYYYDFSFTQVDSYIG) the chain is Extracellular. A helical membrane pass occupies residues 223 to 243 (VLSLDVIVCLYAIVQLVLCFI). At 244 to 261 (QRSNQGKYLSSPTTVAAK) the chain is on the cytoplasmic side. A helical membrane pass occupies residues 262–282 (LTFVFDQVLAYALVATAGAAA). At 283 to 307 (GSALEIRKGTSCSGTWTVICSKGEA) the chain is on the extracellular side. A helical transmembrane segment spans residues 308–328 (SVAMSFFAFAFLAATAAVYSV). The Cytoplasmic segment spans residues 329-336 (RLLRITGR).

This sequence belongs to the Casparian strip membrane proteins (CASP) family. As to quaternary structure, homodimer and heterodimers.

Its subcellular location is the cell membrane. This Physcomitrium patens (Spreading-leaved earth moss) protein is CASP-like protein UU1.